The following is a 200-amino-acid chain: Phospholipase A2 inhibitor 1 (200 aa).

Residues 1–19 (MKSLHIICLLFIFVARGNS) form the signal peptide. Cystine bridges form between Cys22–Cys46, Cys25–Cys32, Cys39–Cys67, Cys73–Cys94, Cys95–Cys100, Cys118–Cys143, Cys136–Cys165, and Cys169–Cys191. Asn176 carries an N-linked (GlcNAc...) asparagine glycan.

It belongs to the CNF-like-inhibitor family. As to quaternary structure, occurs as a mixture of oligomers. Tetrameric arrangement appears to be the predominant quaternary structure. In terms of processing, N-glycosylated. In terms of tissue distribution, expressed by the liver.

The protein localises to the secreted. Inhibits basic phospholipase A2 isozymes PLA-B, BP-I and BP-II. This Protobothrops flavoviridis (Habu) protein is Phospholipase A2 inhibitor 1.